Here is a 324-residue protein sequence, read N- to C-terminus: Homeobox protein engrailed-2 (324 aa).

Disordered stretches follow at residues 1-59 (MEEK…HQHP), 89-174 (GGAR…VLKA), and 215-240 (DRPS…RPRT). Residues 89–110 (GGARGGEGGAGTTEGGGGGAGG) show a composition bias toward gly residues. The segment at residues 235–294 (DKRPRTAFTAEQLQRLKAEFQTNRYLTEQRRQSLAQELSLNESQIKIWFQNKRAKIKKAT) is a DNA-binding region (homeobox).

The protein belongs to the engrailed homeobox family. Cerebellar granule cells.

The protein resides in the nucleus. This is Homeobox protein engrailed-2 (En2) from Mus musculus (Mouse).